The sequence spans 185 residues: Elongation factor P (185 aa).

This sequence belongs to the elongation factor P family.

The protein localises to the cytoplasm. The protein operates within protein biosynthesis; polypeptide chain elongation. Its function is as follows. Involved in peptide bond synthesis. Stimulates efficient translation and peptide-bond synthesis on native or reconstituted 70S ribosomes in vitro. Probably functions indirectly by altering the affinity of the ribosome for aminoacyl-tRNA, thus increasing their reactivity as acceptors for peptidyl transferase. This is Elongation factor P from Salinispora arenicola (strain CNS-205).